Reading from the N-terminus, the 338-residue chain is L-asparaginase 1 (338 aa).

The region spanning 4–329 (KSIYVAYTGG…ETIRKAMSQN (326 aa)) is the Asparaginase/glutaminase domain. T14 acts as the O-isoaspartyl threonine intermediate in catalysis. Residues 59–61 (DSS) and 91–92 (TD) each bind substrate.

It belongs to the asparaginase 1 family. Homotetramer.

It is found in the cytoplasm. It carries out the reaction L-asparagine + H2O = L-aspartate + NH4(+). The polypeptide is L-asparaginase 1 (ansA) (Escherichia coli O157:H7).